A 251-amino-acid polypeptide reads, in one-letter code: uncharacterized protein (251 aa).

The a divalent metal cation site is built by His6, His8, Glu90, His130, His154, and Asp202.

Belongs to the metallo-dependent hydrolases superfamily. TatD-type hydrolase family. Requires a divalent metal cation as cofactor.

This is an uncharacterized protein from Haemophilus influenzae (strain ATCC 51907 / DSM 11121 / KW20 / Rd).